The chain runs to 344 residues: Aurora kinase B (344 aa).

Thr35 is subject to Phosphothreonine. Ser62 is subject to Phosphoserine. Residue Thr64 is modified to Phosphothreonine. The Protein kinase domain maps to 77-327 (FEIGRPLGKG…LAQVSAHPWV (251 aa)). ATP contacts are provided by residues 83 to 91 (LGKGKFGNV) and Lys106. The Proton acceptor role is filled by Asp200. Lys215 bears the N6-acetyllysine mark. Ser227 carries the post-translational modification Phosphoserine. Thr232 carries the phosphothreonine; by autocatalysis modification.

It belongs to the protein kinase superfamily. Ser/Thr protein kinase family. Aurora subfamily. As to quaternary structure, component of the chromosomal passenger complex (CPC) composed of at least BIRC5/survivin, CDCA8/borealin, INCENP, AURKB or AURKC; predominantly independent AURKB- and AURKC-containing complexes exist. Associates with RACGAP1 during M phase. Interacts with SPDYC; this interaction may be required for proper localization of active, Thr-232-phosphorylated AURKB form during prometaphase and metaphase. Interacts with p53/TP53. Interacts (via the middle kinase domain) with NOC2L (via the N- and C-terminus domains). Interacts with CDCA1. Interacts with EVI5. Interacts with JTB. Interacts with NDC80. Interacts with PSMA3. Interacts with RNF2/RING1B. Interacts with SEPTIN1. Interacts with SIRT2. Interacts with TACC1. Interacts with TTC28. Post-translationally, the phosphorylation of Thr-232 requires the binding to INCENP and occurs by means of an autophosphorylation mechanism. Thr-232 phosphorylation is indispensable for the AURKB kinase activity. Acetylated at Lys-215 by KAT5 at kinetochores, increasing AURKB activity and promoting accurate chromosome segregation in mitosis. In terms of processing, ubiquitinated by different BCR (BTB-CUL3-RBX1) E3 ubiquitin ligase complexes. Ubiquitinated by the BCR(KLHL9-KLHL13) E3 ubiquitin ligase complex, ubiquitination leads to removal from mitotic chromosomes and is required for cytokinesis. During anaphase, the BCR(KLHL21) E3 ubiquitin ligase complex recruits the CPC complex from chromosomes to the spindle midzone and mediates the ubiquitination of AURKB. Ubiquitination of AURKB by BCR(KLHL21) E3 ubiquitin ligase complex may not lead to its degradation by the proteasome. Deubiquitinated by USP35; inhibiting CDH1-mediated degradation of AURKB.

Its subcellular location is the nucleus. The protein resides in the chromosome. It localises to the centromere. It is found in the kinetochore. The protein localises to the cytoplasm. Its subcellular location is the cytoskeleton. The protein resides in the spindle. It localises to the midbody. It catalyses the reaction L-seryl-[protein] + ATP = O-phospho-L-seryl-[protein] + ADP + H(+). The catalysed reaction is L-threonyl-[protein] + ATP = O-phospho-L-threonyl-[protein] + ADP + H(+). Activity is greatly increased when AURKB is within the CPC complex. In particular, AURKB-phosphorylated INCENP acts as an activator of AURKB. Positive feedback between HASPIN and AURKB contributes to CPC localization. Its function is as follows. Serine/threonine-protein kinase component of the chromosomal passenger complex (CPC), a complex that acts as a key regulator of mitosis. The CPC complex has essential functions at the centromere in ensuring correct chromosome alignment and segregation and is required for chromatin-induced microtubule stabilization and spindle assembly. Involved in the bipolar attachment of spindle microtubules to kinetochores and is a key regulator for the onset of cytokinesis during mitosis. Required for central/midzone spindle assembly and cleavage furrow formation. Key component of the cytokinesis checkpoint, a process required to delay abscission to prevent both premature resolution of intercellular chromosome bridges and accumulation of DNA damage: phosphorylates CHMP4C, leading to retain abscission-competent VPS4 (VPS4A and/or VPS4B) at the midbody ring until abscission checkpoint signaling is terminated at late cytokinesis. AURKB phosphorylates the CPC complex subunits BIRC5/survivin, CDCA8/borealin and INCENP. Phosphorylation of INCENP leads to increased AURKB activity. Other known AURKB substrates involved in centromeric functions and mitosis are CENPA, DES/desmin, GPAF, KIF2C, NSUN2, RACGAP1, SEPTIN1, VIM/vimentin, HASPIN, and histone H3. A positive feedback loop involving HASPIN and AURKB contributes to localization of CPC to centromeres. Phosphorylation of VIM controls vimentin filament segregation in cytokinetic process, whereas histone H3 is phosphorylated at 'Ser-10' and 'Ser-28' during mitosis (H3S10ph and H3S28ph, respectively). AURKB is also required for kinetochore localization of BUB1 and SGO1. Phosphorylation of p53/TP53 negatively regulates its transcriptional activity. Key regulator of active promoters in resting B- and T-lymphocytes: acts by mediating phosphorylation of H3S28ph at active promoters in resting B-cells, inhibiting RNF2/RING1B-mediated ubiquitination of histone H2A and enhancing binding and activity of the USP16 deubiquitinase at transcribed genes. Acts as an inhibitor of CGAS during mitosis: catalyzes phosphorylation of the N-terminus of CGAS during the G2-M transition, blocking CGAS liquid phase separation and activation, and thereby preventing CGAS-induced autoimmunity. Phosphorylates KRT5 during anaphase and telophase. Phosphorylates ATXN10 which promotes phosphorylation of ATXN10 by PLK1 and may play a role in the regulation of cytokinesis and stimulating the proteasomal degradation of ATXN10. The polypeptide is Aurora kinase B (AURKB) (Sus scrofa (Pig)).